Consider the following 1733-residue polypeptide: ATP-binding cassette sub-family A member 17 (1733 aa).

7 helical membrane passes run 22–42 (TLIT…VLYL), 262–282 (FPLL…NSVL), 306–326 (AWFI…TVLF), 342–362 (TLIF…AFMM), 372–392 (GTVI…YITF), 403–423 (ILSC…ISLF), and 444–464 (FAQV…IAFL). Residues 519-752 (IEIQHLYKVF…YGAGYYMTII (234 aa)) enclose the ABC transporter 1 domain. 555-562 (GHNGAGKT) contacts ATP. N609 carries an N-linked (GlcNAc...) asparagine glycan. 7 helical membrane-spanning segments follow: residues 906–926 (LVLS…LTFF), 1082–1102 (LVVN…ILTV), 1128–1148 (LLWD…VFLW), 1160–1180 (IPAV…LVYT), 1192–1212 (CVKL…LVTV), 1230–1250 (IFLI…YYNF), and 1287–1307 (IGKY…MLFL). The region spanning 1366-1599 (LVVKEVSKVY…FGISYSLQAK (234 aa)) is the ABC transporter 2 domain. Residue 1401–1408 (GLNGAGKT) participates in ATP binding. A compositionally biased stretch (polar residues) spans 1681–1692 (ESSTKEQIQQEQ). The segment at 1681-1733 (ESSTKEQIQQEQAVLASPSPPSNSRPISSPPSRLSSPTPKPLPSPPPSEPILL) is disordered. Positions 1704-1717 (SRPISSPPSRLSSP) are enriched in low complexity. Over residues 1718–1733 (TPKPLPSPPPSEPILL) the composition is skewed to pro residues.

It belongs to the ABC transporter superfamily. ABCA family. Post-translationally, N-glycosylated. In the testis, detected predominantly in elongated spermatids at the late stage of germ cell development and in sperm, with no expression detected in immature germ cells such as spermatogonia and spermatocytes or in somatic cells such as Sertoli cells (at protein level). Expressed in the head and tail midpiece of elongated spermatids and sperm (at protein level). Expressed exclusively in the testis.

The protein localises to the endoplasmic reticulum membrane. It localises to the cytoplasm. It carries out the reaction cholesterol(in) + ATP + H2O = cholesterol(out) + ADP + phosphate + H(+). Its function is as follows. Promotes cholesterol efflux from sperm which renders sperm capable of fertilization. Has also been shown to decrease levels of intracellular esterified neutral lipids including cholesteryl esters, fatty acid esters and triacylglycerols. The protein is ATP-binding cassette sub-family A member 17 of Mus musculus (Mouse).